The following is a 620-amino-acid chain: Coenzyme F420-dependent sulfite reductase (620 aa).

Positions 6 to 35 (LNEIVDSGVCARCGTCTIVCPNGILTFDER) constitute a 4Fe-4S ferredoxin-type 1 domain. Residues Cys15, Cys18, Cys21, Cys25, Cys428, Cys434, Cys468, Cys472, Cys495, Cys498, Cys501, Cys505, Cys524, Cys527, Cys530, and Cys534 each coordinate [4Fe-4S] cluster. Cys472 lines the siroheme pocket. 4Fe-4S ferredoxin-type domains lie at 486–515 (KYPKVNEEKCNGCGRCAEVCKVEAIDIRGE) and 520–544 (NYNVCVGCGKCIKNCPNEAREVKEE).

It belongs to the nitrite and sulfite reductase 4Fe-4S domain family. The cofactor is [4Fe-4S] cluster. Siroheme is required as a cofactor.

The catalysed reaction is 3 oxidized coenzyme F420-(gamma-L-Glu)(n) + hydrogen sulfide + 3 H2O + 2 H(+) = 3 reduced coenzyme F420-(gamma-L-Glu)(n) + sulfite. Functionally, catalyzes the reduction of sulfite to sulfide using reduced F420 as the electron source. Involved in sulfite detoxification and assimilation. Cannot use NADH or NADPH. The polypeptide is Coenzyme F420-dependent sulfite reductase (Methanocaldococcus jannaschii (strain ATCC 43067 / DSM 2661 / JAL-1 / JCM 10045 / NBRC 100440) (Methanococcus jannaschii)).